Reading from the N-terminus, the 158-residue chain is Small ribosomal subunit protein uS7 (158 aa).

It belongs to the universal ribosomal protein uS7 family. In terms of assembly, part of the 30S ribosomal subunit. Contacts proteins S9 and S11.

Its function is as follows. One of the primary rRNA binding proteins, it binds directly to 16S rRNA where it nucleates assembly of the head domain of the 30S subunit. Is located at the subunit interface close to the decoding center, probably blocks exit of the E-site tRNA. In Flavobacterium psychrophilum (strain ATCC 49511 / DSM 21280 / CIP 103535 / JIP02/86), this protein is Small ribosomal subunit protein uS7.